The chain runs to 43 residues: uncharacterized protein (43 aa).

Positions 1–37 (MIIKNNNNNNNNNNNNNNNNNNNNNNNNNNNNNNNNN) are enriched in low complexity. The tract at residues 1-43 (MIIKNNNNNNNNNNNNNNNNNNNNNNNNNNNNNNNNNIEIIIK) is disordered.

This is an uncharacterized protein from Dictyostelium discoideum (Social amoeba).